Here is a 258-residue protein sequence, read N- to C-terminus: Deoxyribose-phosphate aldolase (258 aa).

Catalysis depends on Asp102, which acts as the Proton donor/acceptor. The Schiff-base intermediate with acetaldehyde role is filled by Lys165. Lys199 serves as the catalytic Proton donor/acceptor.

The protein belongs to the DeoC/FbaB aldolase family. DeoC type 2 subfamily.

It is found in the cytoplasm. It carries out the reaction 2-deoxy-D-ribose 5-phosphate = D-glyceraldehyde 3-phosphate + acetaldehyde. The protein operates within carbohydrate degradation; 2-deoxy-D-ribose 1-phosphate degradation; D-glyceraldehyde 3-phosphate and acetaldehyde from 2-deoxy-alpha-D-ribose 1-phosphate: step 2/2. Its function is as follows. Catalyzes a reversible aldol reaction between acetaldehyde and D-glyceraldehyde 3-phosphate to generate 2-deoxy-D-ribose 5-phosphate. The sequence is that of Deoxyribose-phosphate aldolase from Vibrio campbellii (strain ATCC BAA-1116).